A 495-amino-acid chain; its full sequence is 3-octaprenyl-4-hydroxybenzoate carboxy-lyase (495 aa).

Position 172 (Asn-172) interacts with Mn(2+). Prenylated FMN-binding positions include 175–177, 189–191, and 194–195; these read IYR, RWL, and RG. Glu-238 is a Mn(2+) binding site. The active-site Proton donor is the Asp-287.

It belongs to the UbiD family. Homohexamer. Requires prenylated FMN as cofactor. Mn(2+) is required as a cofactor.

The protein resides in the cell membrane. The catalysed reaction is a 4-hydroxy-3-(all-trans-polyprenyl)benzoate + H(+) = a 2-(all-trans-polyprenyl)phenol + CO2. It functions in the pathway cofactor biosynthesis; ubiquinone biosynthesis. Its function is as follows. Catalyzes the decarboxylation of 3-octaprenyl-4-hydroxy benzoate to 2-octaprenylphenol, an intermediate step in ubiquinone biosynthesis. This chain is 3-octaprenyl-4-hydroxybenzoate carboxy-lyase, found in Yersinia pestis bv. Antiqua (strain Angola).